We begin with the raw amino-acid sequence, 177 residues long: Large ribosomal subunit protein uL6 (177 aa).

This sequence belongs to the universal ribosomal protein uL6 family. As to quaternary structure, part of the 50S ribosomal subunit.

In terms of biological role, this protein binds to the 23S rRNA, and is important in its secondary structure. It is located near the subunit interface in the base of the L7/L12 stalk, and near the tRNA binding site of the peptidyltransferase center. In Albidiferax ferrireducens (strain ATCC BAA-621 / DSM 15236 / T118) (Rhodoferax ferrireducens), this protein is Large ribosomal subunit protein uL6.